Consider the following 151-residue polypeptide: Ribonuclease H (151 aa).

The RNase H type-1 domain maps to 1–146 (MSDLFAYTDG…ADELARAGMA (146 aa)). Mg(2+) contacts are provided by aspartate 9, glutamate 52, aspartate 74, and aspartate 138.

This sequence belongs to the RNase H family. In terms of assembly, monomer. Requires Mg(2+) as cofactor.

It localises to the cytoplasm. It carries out the reaction Endonucleolytic cleavage to 5'-phosphomonoester.. Functionally, endonuclease that specifically degrades the RNA of RNA-DNA hybrids. This is Ribonuclease H from Cereibacter sphaeroides (strain ATCC 17025 / ATH 2.4.3) (Rhodobacter sphaeroides).